The primary structure comprises 423 residues: Serine--tRNA ligase (423 aa).

L-serine is bound at residue 229–231 (TAE). An ATP-binding site is contributed by 260–262 (RKE). Glu283 contacts L-serine. 347-350 (EISS) contacts ATP. An L-serine-binding site is contributed by Ser383.

This sequence belongs to the class-II aminoacyl-tRNA synthetase family. Type-1 seryl-tRNA synthetase subfamily. In terms of assembly, homodimer. The tRNA molecule binds across the dimer.

The protein localises to the cytoplasm. The enzyme catalyses tRNA(Ser) + L-serine + ATP = L-seryl-tRNA(Ser) + AMP + diphosphate + H(+). It carries out the reaction tRNA(Sec) + L-serine + ATP = L-seryl-tRNA(Sec) + AMP + diphosphate + H(+). It functions in the pathway aminoacyl-tRNA biosynthesis; selenocysteinyl-tRNA(Sec) biosynthesis; L-seryl-tRNA(Sec) from L-serine and tRNA(Sec): step 1/1. Functionally, catalyzes the attachment of serine to tRNA(Ser). Is also able to aminoacylate tRNA(Sec) with serine, to form the misacylated tRNA L-seryl-tRNA(Sec), which will be further converted into selenocysteinyl-tRNA(Sec). In Syntrophotalea carbinolica (strain DSM 2380 / NBRC 103641 / GraBd1) (Pelobacter carbinolicus), this protein is Serine--tRNA ligase.